The chain runs to 860 residues: MQEQYRPEEIESKVQLHWDEKRTFEVTEDESKEKYYCLSMLPYPSGRLHMGHVRNYTIGDVVARYQRMLGKNVLQPIGWDAFGLPAEGAAVKNNTAPAPWTYDNIAYMKNQLKTLGFGYDWSREIATCTPEYYRWEQKFFTELYKKGLVYKKTSAVNWCPNDQTVLANEQVIDGCCWRCDTKVERKEIPQWFIKITAYADELLRDLDKLDHWPDTVKTMQRNWIGRSEGVEITFDVKGYDNTLTVYTTRPDTFMGATYLAVAAGHPLAQKAAANNAELAAFIDECRNTKVAEAEMATMEKKGVDTGYKAIHPLTGEEIPVWAANFVLMEYGTGAVMAVPGHDQRDYEFASKYGLTIKPVILAADGSEPDLSEQALTEKGVLFNSGEFDGLAFEAAFNAIADKLAEKGVGERKVNYRLRDWGVSRQRYWGAPIPMVTLEDGTVLPTPEDQLPVILPEDVVMDGITSPIKADPEWAKTTVNGMPALRETDTFDTFMESSWYYARYTCPQYQEGMLDSKAANYWLPVDIYIGGIEHAIMHLLYFRFFHKLMRDAGMVTSDEPAKQLLCQGMVLADAFYYVGENGERNWVSPVDAIVERDEKGRIVKAKDAAGHELVYTGMSKMSKSKNNGIDPQVMVERYGADTVRLFMMFASPADMTLEWQESGVEGANRFIKRVWKLVYEHTAKGPVAALNVDALSEDQKALRRDVHKTIAKVTDDIGRRQTFNTAIAAIMELMNKLAKAPQEGEQDRALLQEALQAVVRMLNPFTPHVCFTLWQELGGEGDIDNAPWPVADEQAMVENTTLVVVQVNGKVRGKITVPVDATEEQVRERAGQEHLVAKYLDGVTVRKVIYVPGKLLNLVVG.

The 'HIGH' region signature appears at 42–52; the sequence is PYPSGRLHMGH. Residues 619 to 623 carry the 'KMSKS' region motif; sequence KMSKS. ATP is bound at residue K622.

This sequence belongs to the class-I aminoacyl-tRNA synthetase family.

It is found in the cytoplasm. The enzyme catalyses tRNA(Leu) + L-leucine + ATP = L-leucyl-tRNA(Leu) + AMP + diphosphate. The sequence is that of Leucine--tRNA ligase from Salmonella typhimurium (strain LT2 / SGSC1412 / ATCC 700720).